The following is a 148-amino-acid chain: EKC/KEOPS complex subunit Lage3 (148 aa).

Residues 1–21 (MQTAHTGLSHTADGADGQTSR) form a disordered region.

It belongs to the CTAG/PCC1 family. As to quaternary structure, component of the EKC/KEOPS complex composed of at least GON7, TP53RK, TPRKB, OSGEP and LAGE3; the whole complex dimerizes.

It is found in the cytoplasm. Its subcellular location is the nucleus. Component of the EKC/KEOPS complex that is required for the formation of a threonylcarbamoyl group on adenosine at position 37 (t(6)A37) in tRNAs that read codons beginning with adenine. The complex is probably involved in the transfer of the threonylcarbamoyl moiety of threonylcarbamoyl-AMP (TC-AMP) to the N6 group of A37. LAGE3 functions as a dimerization module for the complex. The polypeptide is EKC/KEOPS complex subunit Lage3 (Mus musculus (Mouse)).